A 1255-amino-acid polypeptide reads, in one-letter code: TBC1 domain family member 1 (1255 aa).

Ser-146 carries the post-translational modification Phosphoserine. Residues 208–228 (RTDWEAPTGQPSAPGPRPMRK) are disordered. Phosphoserine; by PKB/AKT1 is present on Ser-229. Phosphoserine; by AMPK is present on Ser-231. The 161-residue stretch at 238–398 (LAFRKEFQDA…LHKLCERIEG (161 aa)) folds into the PID domain. Ser-489 is subject to Phosphoserine; by PKB/AKT1. Position 497 is a phosphoserine (Ser-497). Thr-499 carries the phosphothreonine; by PKB/AKT1 modification. Phosphoserine is present on residues Ser-501, Ser-519, Ser-521, Ser-559, Ser-560, Ser-564, Ser-565, and Ser-579. 2 disordered regions span residues 509–544 (GNKA…MGDK) and 559–581 (SSDD…LSPQ). Residues 519–539 (SASVDLDSSTSSTLSNTSKEL) are compositionally biased toward low complexity. Residue Thr-590 is modified to Phosphothreonine. Disordered stretches follow at residues 595–614 (PVEC…VSQR) and 621–681 (SVST…GNAV). Position 608 is a phosphoserine (Ser-608). Ser-621 carries the phosphoserine; by PKB/AKT1 modification. A phosphoserine mark is found at Ser-660 and Ser-661. Positions 670–679 (HNSSGEQSGN) are enriched in polar residues. Phosphoserine; by PKB/AKT1 is present on Ser-697. 2 positions are modified to phosphoserine: Ser-698 and Ser-699. Ser-700 carries the post-translational modification Phosphoserine; by AMPK. The interval 764–786 (DSPSRYEDYSELGELPPRSPLEP) is disordered. Phosphoserine occurs at positions 782 and 1028. The Rab-GAP TBC domain occupies 887–1081 (GVPRHHRGEI…RVFDMIFLQG (195 aa)). The residue at position 1039 (Tyr-1039) is a Phosphotyrosine. Thr-1218 bears the Phosphothreonine mark. Residues 1233 to 1255 (LRRQSARPSTPEPDCTQLEPTGD) form a disordered region.

As to quaternary structure, interacts with APPL2 (via BAR domain); interaction is dependent of TBC1D1 phosphorylation at Ser-229; interaction diminishes the phosphorylation of TBC1D1 at Thr-590, resulting in inhibition of SLC2A4/GLUT4 translocation and glucose uptake. Insulin-stimulated phosphorylation by AKT family kinases stimulates SLC2A4/GLUT4 translocation. In terms of tissue distribution, expressed in highest levels in hematopoietic cells, testis and kidney.

The protein resides in the nucleus. May act as a GTPase-activating protein for Rab family protein(s). May play a role in the cell cycle and differentiation of various tissues. Involved in the trafficking and translocation of GLUT4-containing vesicles and insulin-stimulated glucose uptake into cells. The sequence is that of TBC1 domain family member 1 (Tbc1d1) from Mus musculus (Mouse).